The primary structure comprises 375 residues: Succinyl-diaminopimelate desuccinylase (375 aa).

Histidine 66 serves as a coordination point for Zn(2+). The active site involves aspartate 68. Residue aspartate 99 participates in Zn(2+) binding. Glutamate 133 (proton acceptor) is an active-site residue. Positions 134, 162, and 348 each coordinate Zn(2+).

Belongs to the peptidase M20A family. DapE subfamily. Homodimer. The cofactor is Zn(2+). Co(2+) serves as cofactor.

It catalyses the reaction N-succinyl-(2S,6S)-2,6-diaminopimelate + H2O = (2S,6S)-2,6-diaminopimelate + succinate. It participates in amino-acid biosynthesis; L-lysine biosynthesis via DAP pathway; LL-2,6-diaminopimelate from (S)-tetrahydrodipicolinate (succinylase route): step 3/3. Functionally, catalyzes the hydrolysis of N-succinyl-L,L-diaminopimelic acid (SDAP), forming succinate and LL-2,6-diaminopimelate (DAP), an intermediate involved in the bacterial biosynthesis of lysine and meso-diaminopimelic acid, an essential component of bacterial cell walls. The sequence is that of Succinyl-diaminopimelate desuccinylase from Stenotrophomonas maltophilia (strain K279a).